Here is a 207-residue protein sequence, read N- to C-terminus: Holliday junction branch migration complex subunit RuvA (207 aa).

The domain I stretch occupies residues 1 to 63 (MIGMLKGRVE…QDAITLFGFL (63 aa)). A domain II region spans residues 64–142 (DARSKRMFLQ…VDKIETGEPT (79 aa)). The tract at residues 143 to 153 (STQRIPTDKGV) is flexible linker. A domain III region spans residues 153–207 (VEQVVEGLMSLGWKQADAQQAVDSVISSSGIALPLEEGNVPTVLRLALTSLDRGR).

Belongs to the RuvA family. Homotetramer. Forms an RuvA(8)-RuvB(12)-Holliday junction (HJ) complex. HJ DNA is sandwiched between 2 RuvA tetramers; dsDNA enters through RuvA and exits via RuvB. An RuvB hexamer assembles on each DNA strand where it exits the tetramer. Each RuvB hexamer is contacted by two RuvA subunits (via domain III) on 2 adjacent RuvB subunits; this complex drives branch migration. In the full resolvosome a probable DNA-RuvA(4)-RuvB(12)-RuvC(2) complex forms which resolves the HJ.

Its subcellular location is the cytoplasm. Its function is as follows. The RuvA-RuvB-RuvC complex processes Holliday junction (HJ) DNA during genetic recombination and DNA repair, while the RuvA-RuvB complex plays an important role in the rescue of blocked DNA replication forks via replication fork reversal (RFR). RuvA specifically binds to HJ cruciform DNA, conferring on it an open structure. The RuvB hexamer acts as an ATP-dependent pump, pulling dsDNA into and through the RuvAB complex. HJ branch migration allows RuvC to scan DNA until it finds its consensus sequence, where it cleaves and resolves the cruciform DNA. The chain is Holliday junction branch migration complex subunit RuvA from Bifidobacterium animalis subsp. lactis (strain AD011).